Reading from the N-terminus, the 430-residue chain is MKITINQASEFVGKEVTIGAWLANKRSSGKIAFLQLRDGTGFMQGVVVKAEVGDDMFATAKALTQETSLFVTGTINEDTRSPFGYEMAVSGVEVISESHDYPITPKEHGTEFLMDHRHLWLRSNRQHAIMKIRNEIIRASYEFFNKEGFLKIDPPILTGSAPEGTTELFHTKYFDEDAFLSQSGQLYMEAAAMAFGKVFSFGPTFRAEKSKTRRHLIEFWMIEPEMAFYKLEDSLQVQENYVAFLVKAVLDNCRLELDRLGRDVSHLEKMVAPFPRITYTEAIERLHELGFDDIVWGDDFGAPHETAIADSFEKPVFITHYPKAIKPFYMPEDPENDQVVLCADMIAPEGYGEIIGGSERIHDLETLQARMEDFDLDQEAYSWYLDLARYGSVPHSGFGLGLERTVAWISGTEHVRETIPFPRLLNRLYP.

Belongs to the class-II aminoacyl-tRNA synthetase family. In terms of assembly, homodimer.

Its subcellular location is the cytoplasm. The catalysed reaction is tRNA(Asn) + L-asparagine + ATP = L-asparaginyl-tRNA(Asn) + AMP + diphosphate + H(+). The protein is Asparagine--tRNA ligase of Listeria innocua serovar 6a (strain ATCC BAA-680 / CLIP 11262).